Reading from the N-terminus, the 1181-residue chain is MRKKQKLPFDKLAIALMSTSILLNAQSDIKANTVTEDTPATEQAVETPQPTAVSEEAPSSKETKTPQTPDDAEETIADDANDLAPQAPAKTADTPATSKATIRDLNDPSQVKTLQEKAGKGAGTVVAVIDAGFDKNHEAWRLTDKTKARYQSKEDLEKAKKEHGITYGEWVNDKVAYYHDYSKDGKTAVDQEHGTHVSGILSGNAPSETKEPYRLEGAMPEAQLLLMRVEIVNGLADYARNYAQAIIDAVNLGAKVINMSFGNAALAYANLPDETKKAFDYAKSKGVSIVTSAGNDSSFGGKTRLPLADHPDYGVVGTPAAADSTLTVASYSPDKQLTETATVKTADQQDKEMPVLSTNRFEPNKAYDYAYANRGMKEDDFKDVKGKIALIERGDIDFKDKIANAKKAGAVGVLIYDNQDKGFPIELPNVDQMPAAFISRKDGLLLKENPQKTITFNATPKVLPTASGTKLSRFSSWGLTADGNIKPDIAAPGQDILSSVANNKYAKLSGTSMSAPLVAGIMGLLQKQYETQYPDMTPSERLDLAKKVLMSSATALYDEDEKAYFSPRQQGAGAVDAKKASAATMYVTDKDNTSSKVHLNNVSDKFEVTVTVHNKSDKPQELYYQATVQTDKVDGKLFALAPKALYETSWQKITIPANSSKQVTIPIDVSQFSKDLLAPMKNGYFLEGFVRFKQDPTKEELMSIPYIGFRGDFGNLSALEKPIYDSKDGSSYYHEANSDAKDQLDGDGLQFYALKNNFTALTTESNPWTIIKAVKEGVENIEDIESSEITETIFAGTFAKQDDDSHYYIHRHANGKPYAAISPNGDGNRDYVQFQGTFLRNAKNLVAEVLDKEGNVVWTSEVTEQVVKNYNNDLASTLGSTRFEKTRWDGKDKDGKVVANGTYTYRVRYTPISSGAKEQHTDFDVIVDNTTPEVATSATFSTEDRRLTLASKPKTSQPVYRERIAYTYMDEDLPTTEYISPNEDGTFTLPEEAETMEGATVPLKMSDFTYVVEDMAGNITYTPVTKLLEGHSNKPEQDGSDQAPDKKPETKPEQDGSGQAPDKKPETKPEQDGSGQTPDKKPETKPEQDGSGQTPDKKPETKPEKDSSGQTPGKTPQKGQPSRTLEKRSSKRALATKASTKDQLPTTNDKDTNRLHLLKLVMTTFFLGLVAHIFKTKRTED.

An N-terminal signal peptide occupies residues 1 to 31 (MRKKQKLPFDKLAIALMSTSILLNAQSDIKA). Residues 33-52 (TVTEDTPATEQAVETPQPTA) show a composition bias toward polar residues. Residues 33-117 (TVTEDTPATE…PSQVKTLQEK (85 aa)) are disordered. A compositionally biased stretch (acidic residues) spans 70–81 (DDAEETIADDAN). The Peptidase S8 domain occupies 99 to 581 (KATIRDLNDP…AGAVDAKKAS (483 aa)). Active-site charge relay system residues include aspartate 130, histidine 193, and serine 512. Composition is skewed to basic and acidic residues over residues 1029–1054 (EGHSNKPEQDGSDQAPDKKPETKPEQ), 1061–1071 (PDKKPETKPEQ), 1078–1088 (PDKKPETKPEQ), and 1095–1107 (PDKKPETKPEKDS). A disordered region spans residues 1029 to 1150 (EGHSNKPEQD…KDQLPTTNDK (122 aa)). Repeat copies occupy residues 1034-1050 (KPEQDGSDQAPDKKPET), 1051-1067 (KPEQDGSGQAPDKKPET), 1068-1084 (KPEQDGSGQTPDKKPET), 1085-1101 (KPEQDGSGQTPDKKPET), and 1102-1118 (KPEKDSSGQTPGKTPQK). Residues 1034–1118 (KPEQDGSDQA…GQTPGKTPQK (85 aa)) are 5 X 17 AA tandem repeats. 2 stretches are compositionally biased toward polar residues: residues 1109 to 1123 (GQTPGKTPQKGQPSR) and 1137 to 1147 (KASTKDQLPTT). The short motif at 1144-1148 (LPTTN) is the LPXTG sorting signal element. Threonine 1147 carries the post-translational modification Pentaglycyl murein peptidoglycan amidated threonine. A propeptide spans 1148–1181 (NDKDTNRLHLLKLVMTTFFLGLVAHIFKTKRTED) (removed by sortase).

It belongs to the peptidase S8 family. Post-translationally, cleaved by SpeB protease; leading to its degradation. Degradation by SpeB is probably strictly regulated to preserve integrity of C5a peptidase.

It localises to the secreted. The protein resides in the cell wall. It catalyses the reaction The primary cleavage site is at 67-His-|-Lys-68 in human C5a with a minor secondary cleavage site at 58-Ala-|-Ser-59.. Its function is as follows. This virulence factor of S.pyogenes specifically cleaves the human serum chemotaxin C5a at '68-Lys-|-Asp-69' bond near its C-terminus, destroying its ability to serve as a chemoattractant. The protein is C5a peptidase (scpA) of Streptococcus pyogenes serotype M1.